We begin with the raw amino-acid sequence, 466 residues long: Ribosomal protein uS12 methylthiotransferase RimO (466 aa).

An MTTase N-terminal domain is found at 31–141 (PTIGMVSLGC…VLDAVHGAVP (111 aa)). [4Fe-4S] cluster contacts are provided by Cys40, Cys76, Cys105, Cys172, Cys176, and Cys179. The Radical SAM core domain occupies 158 to 397 (LTPRHYSYLK…MAKAQAISEA (240 aa)). A TRAM domain is found at 400-466 (AARVGQVIEV…GEYDLWGRLR (67 aa)).

This sequence belongs to the methylthiotransferase family. RimO subfamily. [4Fe-4S] cluster serves as cofactor.

The protein resides in the cytoplasm. It carries out the reaction L-aspartate(89)-[ribosomal protein uS12]-hydrogen + (sulfur carrier)-SH + AH2 + 2 S-adenosyl-L-methionine = 3-methylsulfanyl-L-aspartate(89)-[ribosomal protein uS12]-hydrogen + (sulfur carrier)-H + 5'-deoxyadenosine + L-methionine + A + S-adenosyl-L-homocysteine + 2 H(+). Its function is as follows. Catalyzes the methylthiolation of an aspartic acid residue of ribosomal protein uS12. The polypeptide is Ribosomal protein uS12 methylthiotransferase RimO (Ruegeria pomeroyi (strain ATCC 700808 / DSM 15171 / DSS-3) (Silicibacter pomeroyi)).